Consider the following 194-residue polypeptide: Naphthalene 1,2-dioxygenase system, small oxygenase component (194 aa).

This sequence belongs to the bacterial ring-hydroxylating dioxygenase beta subunit family. In terms of assembly, the naphthalene dioxygenase (NDO) multicomponent enzyme system is composed of an electron transfer component and a dioxygenase component (iron sulfur protein (ISP)). The electron transfer component is composed of a ferredoxin reductase (NdoR) and a ferredoxin (NdoA), and the dioxygenase component is formed of a heterohexamer (trimer of heterodimers) of three large alpha subunits (NdoB) and three small beta subunits (NdoC).

It participates in aromatic compound metabolism; naphthalene degradation. Component of the naphthalene dioxygenase (NDO) multicomponent enzyme system which catalyzes the incorporation of both atoms of molecular oxygen into naphthalene to form cis-(1R,2S)-dihydroxy-1,2-dihydronaphthalene. The beta subunit seems to have a structural role in the holoenzyme. Also able to catalyze the cis-dihydroxylation of biphenyl and phenanthrene. The sequence is that of Naphthalene 1,2-dioxygenase system, small oxygenase component from Pseudomonas putida (Arthrobacter siderocapsulatus).